The chain runs to 411 residues: Flagellum-associated coiled-coil domain-containing protein 1 (411 aa).

Positions S52–P77 are disordered. Over residues P61–N74 the composition is skewed to basic and acidic residues. 2 coiled-coil regions span residues S124–M220 and N278–E328. N6-acetyllysine is present on K353. Residues F355–L385 adopt a coiled-coil conformation.

It is found in the cytoplasm. Its subcellular location is the cytoplasmic granule. It localises to the cell projection. The protein localises to the cilium. The protein resides in the flagellum. This chain is Flagellum-associated coiled-coil domain-containing protein 1, found in Rattus norvegicus (Rat).